The chain runs to 291 residues: Glycine--tRNA ligase alpha subunit (291 aa).

Belongs to the class-II aminoacyl-tRNA synthetase family. In terms of assembly, tetramer of two alpha and two beta subunits.

The protein resides in the cytoplasm. It carries out the reaction tRNA(Gly) + glycine + ATP = glycyl-tRNA(Gly) + AMP + diphosphate. The sequence is that of Glycine--tRNA ligase alpha subunit from Geobacter metallireducens (strain ATCC 53774 / DSM 7210 / GS-15).